A 674-amino-acid chain; its full sequence is Xaa-Pro aminopeptidase 2 (674 aa).

An N-terminal signal peptide occupies residues 1–21 (MARAHWGCCPWLVLLCACAWG). 3 N-linked (GlcNAc...) asparagine glycosylation sites follow: N35, N49, and N65. Substrate is bound at residue R116. 2 N-linked (GlcNAc...) asparagine glycosylation sites follow: N278 and N291. Position 430 (H430) interacts with substrate. The Zn(2+) site is built by D450, D461, and H524. 3 residues coordinate substrate: H524, H533, and E555. Zn(2+) contacts are provided by E555 and E569. A lipid anchor (GPI-anchor amidated alanine) is attached at A649. Positions 650-674 (ARAPDTASWASVLVVSTLAILGWSV) are cleaved as a propeptide — removed in mature form.

The protein belongs to the peptidase M24B family. In terms of assembly, homotrimer. Requires Zn(2+) as cofactor. In terms of processing, N-glycosylated. Expressed in kidney, lung, heart, placenta, liver, small intestine and colon. No expression in brain, skeletal muscle, pancreas, spleen, thymus, prostate, testis and ovary.

The protein resides in the cell membrane. The catalysed reaction is Release of any N-terminal amino acid, including proline, that is linked to proline, even from a dipeptide or tripeptide.. Its activity is regulated as follows. Inhibited by apstatin and the chelating agent 1,10-phenanthroline. Also inhibited by high concentrations of Zn(2+). Not significantly inhibited by bestatin or phosphoramidon. Membrane-bound metalloprotease which catalyzes the removal of a penultimate prolyl residue from the N-termini of peptides, such as Arg-Pro-Pro. May play a role in the metabolism of the vasodilator bradykinin. This chain is Xaa-Pro aminopeptidase 2 (XPNPEP2), found in Homo sapiens (Human).